We begin with the raw amino-acid sequence, 449 residues long: Chromosomal replication initiator protein DnaA (449 aa).

The segment at 1-72 is domain I, interacts with DnaA modulators; that stretch reads MPNLEELWAY…VEGVYEFAQL (72 aa). The segment at 72 to 109 is domain II; the sequence is LEVDPVIMTKDELQPAPATDQRPAVEEDDQNLTFKAKT. The interval 110–326 is domain III, AAA+ region; sequence HLNPKYTFDH…GALVRVQAFS (217 aa). ATP contacts are provided by Gly-154, Gly-156, Lys-157, and Thr-158. Residues 327–449 form a domain IV, binds dsDNA region; it reads TMKNEDITTS…ELRNILKNRG (123 aa).

The protein belongs to the DnaA family. Oligomerizes as a right-handed, spiral filament on DNA at oriC.

The protein resides in the cytoplasm. Its function is as follows. Plays an essential role in the initiation and regulation of chromosomal replication. ATP-DnaA binds to the origin of replication (oriC) to initiate formation of the DNA replication initiation complex once per cell cycle. Binds the DnaA box (a 9 base pair repeat at the origin) and separates the double-stranded (ds)DNA. Forms a right-handed helical filament on oriC DNA; dsDNA binds to the exterior of the filament while single-stranded (ss)DNA is stabiized in the filament's interior. The ATP-DnaA-oriC complex binds and stabilizes one strand of the AT-rich DNA unwinding element (DUE), permitting loading of DNA polymerase. After initiation quickly degrades to an ADP-DnaA complex that is not apt for DNA replication. Binds acidic phospholipids. This is Chromosomal replication initiator protein DnaA from Lacticaseibacillus paracasei (strain ATCC 334 / BCRC 17002 / CCUG 31169 / CIP 107868 / KCTC 3260 / NRRL B-441) (Lactobacillus paracasei).